Here is a 146-residue protein sequence, read N- to C-terminus: MADPEKILKVSVVTPDGIVYSHNATMVAMRAIDGERTIMYDHLPIVTPLAIGEVRVKRTHEMNDRVDHIAVNGGYIEFSNNEATIIADSAERARNIDVERAQSAKKRAEQHMQEAKEKHNEREMLEAEIALRRAVNRLHVRENYGK.

The interval 102–122 (QSAKKRAEQHMQEAKEKHNER) is disordered.

It belongs to the ATPase epsilon chain family. F-type ATPases have 2 components, CF(1) - the catalytic core - and CF(0) - the membrane proton channel. CF(1) has five subunits: alpha(3), beta(3), gamma(1), delta(1), epsilon(1). CF(0) has three main subunits: a, b and c.

The protein resides in the cell membrane. Functionally, produces ATP from ADP in the presence of a proton gradient across the membrane. This is ATP synthase epsilon chain from Lactobacillus gasseri (strain ATCC 33323 / DSM 20243 / BCRC 14619 / CIP 102991 / JCM 1131 / KCTC 3163 / NCIMB 11718 / NCTC 13722 / AM63).